Here is a 705-residue protein sequence, read N- to C-terminus: MAKHDLHLTRNIGIMAHIDAGKTTTSERILFYTGLTHKIGEVHDGAATMDWMEQEQERGITITSAATTTRWKYAGNTYKINLIDTPGHVDFTAEVERSLRVLDGAVAAYCAVGGVEPQSETVWRQADKYNVPRIGYVNKMDRSGADFFEVVRQMKDVLGANACPVVIPIGAEESFKGVVDLIKMKAILWHDETMGADYSVEEIPANLVDEANEWREKMLEKVAEFDDALMEKFFDDPSTITEEEILRALRAGTLKMDIVPMFCGSSFKNKGVQTLLDYVCAFLPSPLDTPAIVGTNPTTGAEEDRKPSEDEKTSALAFKIATDPYVGRLTFFRVYSGKVEAGSYIYNTRSGKKERVSRLFQMHSNKQNPVEVIGAGDIGAGVGFKDIRTGDTLCDEDAPIVLESMEFPDPVIGIAVEPKTQKDLDKLSNGLAKLAEEDPTFTVKTDEQSGQTIISGMGELHLDIIIDRLKREFKVECNQGKPQVNYKEAITKTVELREVYKKQSGGRGKFADIIVAIGPVDEDFTQGGLQFIDEVKGGNVPKEFIPSVQKGFQTAMKNGVLAGYPLDSLKVVLKDGSFHPVDSDQLSFEICAIQAYKNACAKAGPVLTEPIMKLEVVTPEENMGDVIGDLNKRRGQVEGMESSRSGARIVKAKVPLAEMFGYVTALRTITSGRATSSMTYDHHAQVSSSIAKAVLEEVKGRVDLV.

A tr-type G domain is found at 7–287 (HLTRNIGIMA…YVCAFLPSPL (281 aa)). GTP-binding positions include 16-23 (AHIDAGKT), 84-88 (DTPGH), and 138-141 (NKMD). Residues 293–312 (VGTNPTTGAEEDRKPSEDEK) form a disordered region. Basic and acidic residues predominate over residues 302 to 312 (EEDRKPSEDEK).

This sequence belongs to the TRAFAC class translation factor GTPase superfamily. Classic translation factor GTPase family. EF-G/EF-2 subfamily.

It is found in the cytoplasm. Functionally, catalyzes the GTP-dependent ribosomal translocation step during translation elongation. During this step, the ribosome changes from the pre-translocational (PRE) to the post-translocational (POST) state as the newly formed A-site-bound peptidyl-tRNA and P-site-bound deacylated tRNA move to the P and E sites, respectively. Catalyzes the coordinated movement of the two tRNA molecules, the mRNA and conformational changes in the ribosome. The polypeptide is Elongation factor G (Phocaeicola vulgatus (strain ATCC 8482 / DSM 1447 / JCM 5826 / CCUG 4940 / NBRC 14291 / NCTC 11154) (Bacteroides vulgatus)).